Here is a 110-residue protein sequence, read N- to C-terminus: UPF0145 protein LMOf2365_0219 (110 aa).

It belongs to the UPF0145 family.

The chain is UPF0145 protein LMOf2365_0219 from Listeria monocytogenes serotype 4b (strain F2365).